The chain runs to 85 residues: U4-theraphotoxin-Hhn1a (85 aa).

The N-terminal stretch at 1 to 22 is a signal peptide; it reads MKVTLIAILTCAAVLVLHTTAA. A propeptide spanning residues 23–48 is cleaved from the precursor; sequence EELEAESQLMKVGMPDTELAAVDEER. Cystine bridges form between cysteine 52–cysteine 66, cysteine 56–cysteine 77, and cysteine 71–cysteine 82.

The protein belongs to the neurotoxin 12 (Hwtx-2) family. 02 (Hwtx-2) subfamily. As to quaternary structure, monomer. As to expression, expressed by the venom gland.

It is found in the secreted. Functionally, neurotoxin active on both insects and mammals. In Cyriopagopus hainanus (Chinese bird spider), this protein is U4-theraphotoxin-Hhn1a.